A 131-amino-acid polypeptide reads, in one-letter code: Small ribosomal subunit protein uS8 (131 aa).

Belongs to the universal ribosomal protein uS8 family. Part of the 30S ribosomal subunit. Contacts proteins S5 and S12.

Its function is as follows. One of the primary rRNA binding proteins, it binds directly to 16S rRNA central domain where it helps coordinate assembly of the platform of the 30S subunit. This Wolbachia sp. subsp. Brugia malayi (strain TRS) protein is Small ribosomal subunit protein uS8.